The chain runs to 521 residues: Maturase K (521 aa).

Belongs to the intron maturase 2 family. MatK subfamily.

The protein localises to the plastid. Its subcellular location is the chloroplast. Usually encoded in the trnK tRNA gene intron. Probably assists in splicing its own and other chloroplast group II introns. The chain is Maturase K from Trillium erectum (Beth root).